Consider the following 108-residue polypeptide: MMKGGMAGLMKQAQQMQEKMQKMQEELANAEVTGQSGAGLVSVVMTGRHDVKRVSLDDSLMQEDKEILEDLIAAAVNDAVRKIEQNNQEKMSGFTSGMQLPPGFKMPF.

Disordered regions lie at residues 1–25 and 87–108; these read MMKG…KMQE and NQEK…KMPF. Residues 87–98 show a composition bias toward polar residues; it reads NQEKMSGFTSGM.

It belongs to the YbaB/EbfC family. Homodimer.

It localises to the cytoplasm. Its subcellular location is the nucleoid. Its function is as follows. Binds to DNA and alters its conformation. May be involved in regulation of gene expression, nucleoid organization and DNA protection. In Pseudomonas aeruginosa (strain LESB58), this protein is Nucleoid-associated protein PLES_37951.